The chain runs to 186 residues: MNAKRAIPVRERNIVLIGFMGVGKTTIGQLVAKKLYRDFIDIDQQIEKDFNMSIPEIFEKKGEDFFRKTEKEYILDICHHKRFKIVSLGGGSFKQEEIRNCCLENCLVLHLDLSWENWKQRADLLIESRPVLHNRSMDEMEQLFNERKVIYDKHNSKVATDNLSPEEVADYIVETLKIGWDLYQPM.

21 to 26 provides a ligand contact to ATP; sequence GVGKTT. Threonine 25 contacts Mg(2+). The substrate site is built by aspartate 43, arginine 67, and glycine 90. Position 129 (arginine 129) interacts with ATP. Arginine 147 contacts substrate.

This sequence belongs to the shikimate kinase family. Monomer. Mg(2+) is required as a cofactor.

Its subcellular location is the cytoplasm. The enzyme catalyses shikimate + ATP = 3-phosphoshikimate + ADP + H(+). Its pathway is metabolic intermediate biosynthesis; chorismate biosynthesis; chorismate from D-erythrose 4-phosphate and phosphoenolpyruvate: step 5/7. In terms of biological role, catalyzes the specific phosphorylation of the 3-hydroxyl group of shikimic acid using ATP as a cosubstrate. This Bacillus subtilis (strain 168) protein is Shikimate kinase.